Reading from the N-terminus, the 222-residue chain is Uridine diphosphate glucose pyrophosphatase NUDT14 (222 aa).

The 169-residue stretch at 38–206 folds into the Nudix hydrolase domain; sequence KTHDSVTILM…DVPKTLGVIF (169 aa). The Nudix box motif lies at 111–129; sequence PGLSLEEVACKEAWEECGY.

Belongs to the Nudix hydrolase family. Homodimer. Requires Mg(2+) as cofactor.

The protein resides in the cytoplasm. The catalysed reaction is UDP-sugar + H2O = UMP + alpha-D-aldose 1-phosphate.. In terms of biological role, hydrolyzes UDP-glucose to glucose 1-phosphate and UMP and ADP-ribose to ribose 5-phosphate and AMP. The physiological substrate is probably UDP-glucose. Poor activity on other substrates such as ADP-glucose, CDP-glucose, GDP-glucose and GDP-mannose. In Bos taurus (Bovine), this protein is Uridine diphosphate glucose pyrophosphatase NUDT14 (NUDT14).